The sequence spans 336 residues: Foldase protein PrsA (336 aa).

Positions 1-22 (MKSAKKLLSVLCLGIFILTFTA) are cleaved as a signal peptide. Cys23 carries the N-palmitoyl cysteine lipid modification. Cys23 carries the S-diacylglycerol cysteine lipid modification. The PpiC domain occupies 194–286 (PNTMNVSHIL…FGYHIIKINS (93 aa)).

Belongs to the PrsA family.

The protein localises to the cell membrane. The catalysed reaction is [protein]-peptidylproline (omega=180) = [protein]-peptidylproline (omega=0). Plays a major role in protein secretion by helping the post-translocational extracellular folding of several secreted proteins. The polypeptide is Foldase protein PrsA (Clostridium botulinum (strain 657 / Type Ba4)).